We begin with the raw amino-acid sequence, 362 residues long: MSSPPLSSPVPQVKTTQNGKSPDATVHLLAGAIAGLVSAVTLQPFDLLKTRLQQQQLTTKQEVRTTLTKELKKLTRVKDLWRGTLPSTLRTSIGAGLYFTTLSKMRTSWGEYKQSKDSSINLKSNSSILPKLTAMENLTTGFIARGIVGYITMPITIIKTRFESNLYNYNSMYEGISGIYLDDKKQQQQIRNPSINKGVGGGGSWKNFFKGSVATLARDCPYAGLYVLTYEAFKNDLIPLIIPNSSLSLSSSSSLSSSSSLFVFNDNNRSSIINSTAAVLAASTCTTITAPFDAIKTRLQLTNEEGGSMTTVLKKMLREDGGIKNLFRGLSLRLGRKGISAGISWCIYEELIKSNYFQSKFL.

3 Solcar repeats span residues 22 to 108 (PDAT…MRTS), 132 to 236 (LTAM…FKND), and 269 to 354 (RSSI…LIKS). Helical transmembrane passes span 28–53 (LLAG…TRLQ), 83–109 (GTLP…RTSW), 138–163 (LTTG…TRFE), 211–234 (GSVA…EAFK), 273–299 (INST…KTRL), and 329–347 (GLSL…SWCI).

It belongs to the mitochondrial carrier (TC 2.A.29) family. SLC25A38 subfamily.

The protein resides in the mitochondrion inner membrane. It carries out the reaction glycine(in) = glycine(out). Mitochondrial glycine transporter that imports glycine into the mitochondrial matrix. Plays an important role in providing glycine for the first enzymatic step in heme biosynthesis, the condensation of glycine with succinyl-CoA to produce 5-aminolevulinate (ALA) in the mitochondrial matrix. This Candida albicans (strain SC5314 / ATCC MYA-2876) (Yeast) protein is Mitochondrial glycine transporter.